The following is a 150-amino-acid chain: 3-hydroxyacyl-[acyl-carrier-protein] dehydratase FabZ (150 aa).

Residue H53 is part of the active site.

Belongs to the thioester dehydratase family. FabZ subfamily.

Its subcellular location is the cytoplasm. It catalyses the reaction a (3R)-hydroxyacyl-[ACP] = a (2E)-enoyl-[ACP] + H2O. Its function is as follows. Involved in unsaturated fatty acids biosynthesis. Catalyzes the dehydration of short chain beta-hydroxyacyl-ACPs and long chain saturated and unsaturated beta-hydroxyacyl-ACPs. This chain is 3-hydroxyacyl-[acyl-carrier-protein] dehydratase FabZ, found in Photorhabdus laumondii subsp. laumondii (strain DSM 15139 / CIP 105565 / TT01) (Photorhabdus luminescens subsp. laumondii).